Consider the following 502-residue polypeptide: Glycogen synthase 1 (502 aa).

Lys18 provides a ligand contact to ADP-alpha-D-glucose.

Belongs to the glycosyltransferase 1 family. Bacterial/plant glycogen synthase subfamily.

The enzyme catalyses [(1-&gt;4)-alpha-D-glucosyl](n) + ADP-alpha-D-glucose = [(1-&gt;4)-alpha-D-glucosyl](n+1) + ADP + H(+). The protein operates within glycan biosynthesis; glycogen biosynthesis. Synthesizes alpha-1,4-glucan chains using ADP-glucose. The sequence is that of Glycogen synthase 1 from Geobacter metallireducens (strain ATCC 53774 / DSM 7210 / GS-15).